A 1002-amino-acid polypeptide reads, in one-letter code: Vacuolar protein sorting-associated protein 18 homolog (1002 aa).

Ser344 carries the post-translational modification Phosphoserine. One copy of the CHCR repeat lies at 650–804; sequence LMAQGSRLEV…DIKGTNDVKK (155 aa). Residues 827 to 880 are a coiled coil; that stretch reads FEKIDNFKEAICDALRDYNQRIQELQREMAETTEQTDRVTAELQQLRQHSLTVE. The RING-type; degenerate zinc-finger motif lies at 885–924; sequence CEICEMMLLVKPFFIFICGHKFHSDCLEKHVVPLLTKEQC.

Belongs to the VPS18 family. As to quaternary structure, component of the class C core vacuole/endosome tethering (CORVET) complex composed of at least Vps8, dor/Vps18, car/Vps33A and Vps16A; unlike in other species, Vps11 is not part of the Drosophila complex. Due to the reduced number of components the Drosophila CORVET complex is often referred to as the miniCORVET complex. Interacts with car/Vps33A. Interacts with ema. Component of the homotypic fusion and vacuole protein sorting (HOPS) complex, composed of Vps16A, car/Vps33A, dor/Vps18, Vps39, Vps11 and lt/Vps41. The tethering complex core made up of Vps16A, car/Vps33A and dor/Vps18 and shared by both HOPS and CORVET, preferentially associates with CORVET-specific Vps8 over HOPS-specific lt/Vps41. Interacts with Syx17 (via SNARE domain); the interaction may involve multiple components of the HOPS complex and may promote assembly of the Syx17-Snap29-Vamp7 trans-SNARE complex.

The protein resides in the early endosome. It localises to the late endosome membrane. It is found in the lysosome membrane. The protein localises to the cytoplasmic vesicle. Its subcellular location is the autophagosome. Core component of the class C core vacuole/endosome tethering (CORVET) and the homotypic fusion and vacuole protein sorting (HOPS) tethering complexes involved in endo-lysosomal vesicle trafficking and lysosome biogenesis. The CORVET complex facilitates docking and fusion of endosomal vesicles during endosome maturation, acts upstream of HOPS, but is not involved in autophagic flux. The CORVET complex may cooperate with the early endosomal tether Rbsn-5 to mediate endosomal fusion. The HOPS complex facilitates docking and fusion of lysosomes with late endosomes and several other types of vesicles. The HOPS complex is also involved in autophagy and crinophagy (the elimination of unused secretory granules through their fusion with lysosomes). The HOPS complex mediates autophagocitic flux, probably by binding autophagosome-associated Syx17/syntaxin 17, promoting assembly of the trans-SNARE complex and instigating autophagosome-lysosome fusion. Independent of Syx17/syntaxin 17, HOPS is involved in biosynthetic transport to lysosomes and lysosome-related organelles such as eye-pigment granules. Required for endocytic degradation of boss/bride of sevenless and N/Notch in developing ommatidia. Required for autophagocytosis-dependent remodeling of myofibrils and transverse-tubules (T-tubules) during metamorphosis. In larval neuromuscular junctions, essential for endosomal sorting that traffics old or dysfunctional synaptic vesicle proteins through a degradative endolysosomal route. Required to maintain normal levels of rush, which functions in endosome formation and trafficking. The polypeptide is Vacuolar protein sorting-associated protein 18 homolog (Drosophila melanogaster (Fruit fly)).